A 207-amino-acid chain; its full sequence is Superoxide dismutase [Mn] (207 aa).

Mn(2+) is bound by residues H28, H76, D160, and H164.

The protein belongs to the iron/manganese superoxide dismutase family. As to quaternary structure, homotetramer. Mn(2+) serves as cofactor.

It localises to the secreted. The enzyme catalyses 2 superoxide + 2 H(+) = H2O2 + O2. Destroys superoxide anion radicals which are normally produced within the cells and which are toxic to biological systems. The protein is Superoxide dismutase [Mn] (sodA) of Mycolicibacterium smegmatis (Mycobacterium smegmatis).